Here is a 544-residue protein sequence, read N- to C-terminus: MAKEIKFSEDARAAMLRGVDQLANTVKTTLGPKGRNVVLDKSYGSPEITNDGVTIAKSIDLEDHYENMGAKLVAEVASKTNDIAGDGTTTATVLAQSIIREGMKNVTAGANPVGIRTGIEKATKAAVDELHKISHKVNGKKEIAQVASVSSSNTEVGSLIADAMEKVGHDGVITIEESKGIDTELSVVEGMQFDRGYLSQYMVTDNDKMEADLDDPYILITDKKISNIQDILPLLQEIVQQGKALLIIADDVAGEALPTLVLNKIRGTFNVVAVKAPGFGDRRKAQLEDIATLTGGTVISSDLGLDLKDTKLEQLGRAGKVTVTKDNTTIVDGAGSKDAIAERVNIIKKQIDDTTSDFDREKLQERLAKLAGGVAVVKVGAATETELKERKYRIEDALNATRAAVEEGYVAGGGTALVDVLPAVAALKEEGDVQTGINIVLRALEEPVRQIAENAGKEGSVIVEQLKKEKQGVGYNAATDEWEDMAKSGIIDPTKVTRSALQNAASVAALMLTTEAVVADKPDPNANNNAAAGANPAAGMGGMM.

Residues 29–32 (TLGP), 86–90 (DGTTT), glycine 413, 476–478 (NAA), and aspartate 492 each bind ATP. A disordered region spans residues 522-544 (PDPNANNNAAAGANPAAGMGGMM). Over residues 524 to 538 (PNANNNAAAGANPAA) the composition is skewed to low complexity.

It belongs to the chaperonin (HSP60) family. Forms a cylinder of 14 subunits composed of two heptameric rings stacked back-to-back. Interacts with the co-chaperonin GroES.

It localises to the cytoplasm. The catalysed reaction is ATP + H2O + a folded polypeptide = ADP + phosphate + an unfolded polypeptide.. Together with its co-chaperonin GroES, plays an essential role in assisting protein folding. The GroEL-GroES system forms a nano-cage that allows encapsulation of the non-native substrate proteins and provides a physical environment optimized to promote and accelerate protein folding. This Lacticaseibacillus casei (strain BL23) (Lactobacillus casei) protein is Chaperonin GroEL.